The sequence spans 1363 residues: Tonsoku-like protein (1363 aa).

8 TPR repeats span residues Ala-27–Val-60, Ala-67–Leu-100, Gln-107–Lys-147, Thr-162–Asn-195, Phe-202–Met-235, Ser-242–Lys-275, Met-311–Leu-344, and Ala-352–Asn-385. Residues Ser-460–Gln-511 form a disordered region. The span at Thr-465–Leu-510 shows a compositional bias: acidic residues. ANK repeat units follow at residues Met-528 to Pro-557, Cys-561 to Asp-590, and Asp-597 to Leu-626. A disordered region spans residues Glu-662–Ala-786. The span at Met-666 to Ser-684 shows a compositional bias: polar residues. Residues Thr-692 to Ser-713 are compositionally biased toward pro residues. Basic and acidic residues predominate over residues Lys-771–Glu-780. Arg-796 carries the omega-N-methylarginine modification. Disordered regions lie at residues Pro-841–Val-866 and Ala-883–Tyr-909. Over residues Leu-842–Ser-853 the composition is skewed to polar residues. LRR repeat units follow at residues Ala-1060–Ala-1081, Asn-1088–Val-1108, Asn-1119–Ser-1140, Met-1147–Ala-1168, His-1179–Leu-1199, Thr-1206–Ser-1214, Ala-1238–Leu-1261, Ser-1266–Leu-1287, Gly-1296–Asp-1317, and Gln-1322–Gln-1343.

The protein belongs to the Tonsoku family. Component of the MMS22L-TONSL complex, a complex at least composed of MMS22L and TONSL/NFKBIL2. Interacts with the MCM complex, the FACT complex and the RPA complex. Interacts with MCM5; the interaction is direct. Binds histones, with a strong preference for histone H3.1 (histones H3.1 and H3-4/H3.1t). Interacts (via ANK repeats) with histone H4; specifically binds histone H4 lacking methylation at 'Lys-20' (H4K20me0). May interact with DNAJC9; the interaction seems to be histone-dependent.

Its subcellular location is the nucleus. The protein localises to the chromosome. It is found in the cytoplasm. Its function is as follows. Component of the MMS22L-TONSL complex, a complex that promotes homologous recombination-mediated repair of double-strand breaks (DSBs) at stalled or collapsed replication forks. The MMS22L-TONSL complex is required to maintain genome integrity during DNA replication. It mediates the assembly of RAD51 filaments on single-stranded DNA (ssDNA): the MMS22L-TONSL complex is recruited to DSBs following histone replacement by histone chaperones and eviction of the replication protein A complex (RPA/RP-A) from DSBs. Following recruitment to DSBs, the TONSL-MMS22L complex promotes recruitment of RAD51 filaments and subsequent homologous recombination. Within the complex, TONSL acts as a histone reader, which recognizes and binds newly synthesized histones following their replacement by histone chaperones. Specifically binds histone H4 lacking methylation at 'Lys-20' (H4K20me0) and histone H3.1. This chain is Tonsoku-like protein, found in Mus musculus (Mouse).